The chain runs to 131 residues: Agouti-signaling protein (131 aa).

The first 22 residues, M1 to S22, serve as a signal peptide directing secretion. N39 carries an N-linked (GlcNAc...) asparagine glycan. The segment at K58–K100 is disordered. A compositionally biased stretch (basic residues) spans R70–A84. 5 disulfides stabilise this stretch: C92-C107, C99-C113, C106-C124, C110-C131, and C115-C122. Positions C92–C131 constitute an Agouti domain.

In terms of tissue distribution, epithelial cells of the hair follicles and the epidermis.

Its subcellular location is the secreted. In terms of biological role, involved in the regulation of melanogenesis. The binding of ASP to MC1R precludes alpha-MSH initiated signaling and thus blocks production of cAMP, leading to a down-regulation of eumelanogenesis (brown/black pigment) and thus increasing synthesis of pheomelanin (yellow/red pigment). Causes hair follicle melanocytes to synthesize phaeomelanin instead of black or brown pigment eumelanin and produces hairs with a subapical yellow band on an otherwise black or brown background when expressed during the mid-portion of hair growth. This chain is Agouti-signaling protein (Asip), found in Mus musculus (Mouse).